A 40-amino-acid chain; its full sequence is Small polypeptide DEVIL 6 (40 aa).

Positions 9 to 40 are required for DVL/RTFL small polypeptide activity; the sequence is SSSRGLGGVLREQRAKLYIIKRCVVMLLCWQD. A helical transmembrane segment spans residues 12–28; the sequence is RGLGGVLREQRAKLYII.

The protein belongs to the DVL/RTFL small polypeptides family.

It localises to the cell membrane. Small polypeptide acting as a regulatory molecule which coordinates cellular responses required for differentiation, growth and development, probably by restricting polar cell proliferation in lateral organs and coordinating socket cell recruitment and differentiation at trichome sites. The sequence is that of Small polypeptide DEVIL 6 from Arabidopsis thaliana (Mouse-ear cress).